A 508-amino-acid chain; its full sequence is MGFQKSPDGGWGWVIVVVSFFTQFLCYGSPLAVGVLYVEWLDAFGEGKGKTAWVGSLASGVGLLASPVCSLFVSSFGARPVTIFSGFLVAGGLMLSSLAPNIYFLFFSYGIVVGLGCGLLYTATVTITCQYFDSRRGLALGLISTGSSVGLFIYAALQRMLIEFYGLDGCLLIVGALALNILACGSLMRPLQTSDCPFPEKIAPENVPDRYSIYNEKEKNQEETMTFQDKGYSNEDKCLPNGDWGRETSLPKNPTGAAHTKEPEPYKKKVVEQTNFCKQLAKRKWQVYRNYCGETASLFKNKVFSALFVAILLFDIGGFPPSLLMEDVARSYHVREEDLTIPLISIFGIMTAVGKLLLGILADFKWVNTLYLYVATLIITGLALCAIPLAKSYVTLAILSGILGFLTGNWSIFPYVTTKTVGIDKLAHAYGILMFFAGLGNSLGPPIVGWFYDWTQTYDIAFYFSGFCVLLGGFILLLAILPCWGMCNQRLPKPAAPTTFFYKVASNV.

A run of 6 helical transmembrane segments spans residues 13–33, 53–73, 80–100, 102–122, 137–157, and 164–184; these read WVIVVVSFFTQFLCYGSPLAV, WVGSLASGVGLLASPVCSLFV, PVTIFSGFLVAGGLMLSSLAP, IYFLFFSYGIVVGLGCGLLYT, GLALGLISTGSSVGLFIYAAL, and FYGLDGCLLIVGALALNILAC. The segment at 242-263 is disordered; that stretch reads GDWGRETSLPKNPTGAAHTKEP. Helical transmembrane passes span 303-323, 341-361, 370-390, 396-416, 431-451, and 460-480; these read VFSALFVAILLFDIGGFPPSL, IPLISIFGIMTAVGKLLLGIL, LYLYVATLIITGLALCAIPLA, LAILSGILGFLTGNWSIFPYV, GILMFFAGLGNSLGPPIVGWF, and IAFYFSGFCVLLGGFILLLAI.

It belongs to the major facilitator superfamily. Monocarboxylate porter (TC 2.A.1.13) family. In terms of tissue distribution, expressed in the liver and kidneys. In the liver localizes on the sinusoidal membrane of the hepatocytes.

The protein resides in the cell membrane. It catalyses the reaction creatine(in) = creatine(out). It carries out the reaction (R)-carnitine(in) = (R)-carnitine(out). Its function is as follows. Extracellular pH-and Na(+)-sensitive low-affinity creatine transporter. Also functions as a pH-independent carnitine efflux transporter. The sequence is that of Monocarboxylate transporter 9 (Slc16a9) from Rattus norvegicus (Rat).